A 497-amino-acid chain; its full sequence is MRRPSRRRSKASTPPRSHTTPRRTGPSDSRRRPGTKEQPRPSVQGGTRQAEHDLKVSSPNSESSQYSTSELWSHKVIANYSELFAASVGNVDWLRFCVNPERKEIIVDDKGFTAIHFAAQKCQLSCLKVLIEEYKYPVDLPTNKGQTPLHLVIHKNNKSDILPCIDYLLKKGAAINSQTYNGSTPLHLASCNGLLGCIKLLVQSGANVHARDATGFKPIDYCRLWNHRTCARFLKDVMWKHDKKVLAQEMEKLRTLKEKLTILEYHYLVEYQKEHQILREAHFRKWLQNKVLAQTLGSADSKQKAGVQPWSLASNTLRCPITESLHYPSVEAQLKNLPSPVVPPKPIYKQTTISRPKLWNYSANPARSPITNIGHPQNIRLGVHPEPYKEHDFRRFLEVTRNKHGGACLRTVDRQLVTPVPQLPFEMMVRVLYPGTQPYRMKVPQGLYPRDILKVPEKRHVGDTCSNTMAMTLRETFDKPFLDSLEVCRTRVAPPSK.

Basic residues predominate over residues 1–10; sequence MRRPSRRRSK. Positions 1–65 are disordered; it reads MRRPSRRRSK…VSSPNSESSQ (65 aa). The span at 12 to 27 shows a compositional bias: low complexity; it reads STPPRSHTTPRRTGPS. Basic and acidic residues predominate over residues 28-39; the sequence is DSRRRPGTKEQP. ANK repeat units lie at residues 110 to 140, 144 to 177, and 181 to 210; these read KGFTAIHFAAQKCQLSCLKVLIEEYKYPVDL, KGQTPLHLVIHKNNKSDILPCIDYLLKKGAAINS, and NGSTPLHLASCNGLLGCIKLLVQSGANVHA. Residues 239 to 264 are a coiled coil; it reads WKHDKKVLAQEMEKLRTLKEKLTILE.

In terms of assembly, interacts with PSRC1; recruited by PSRC1 to the spindle during mitosis. In terms of processing, phosphorylated during mitosis.

The protein localises to the cytoplasm. Its subcellular location is the cytoskeleton. It localises to the spindle. It is found in the spindle pole. Its function is as follows. Required for normal progression through mitosis. Involved in chromosome alignment and cytokinesis via regulation of microtubules polymerization. This is Ankyrin repeat domain-containing protein 53 (Ankrd53) from Mus musculus (Mouse).